Consider the following 149-residue polypeptide: Ribonuclease pancreatic alpha-type (149 aa).

The first 25 residues, 1 to 25 (MGLEKSFILFSLLVLVLGWVQPSLG), serve as a signal peptide directing secretion. Positions 32 and 35 each coordinate substrate. The active-site Proton acceptor is the His-37. 4 disulfide bridges follow: Cys-51–Cys-109, Cys-65–Cys-120, Cys-83–Cys-135, and Cys-90–Cys-97. Substrate is bound by residues 66 to 70 (KPVNT), Lys-91, and Arg-110. His-144 acts as the Proton donor in catalysis.

Belongs to the pancreatic ribonuclease family. As to quaternary structure, monomer.

It is found in the secreted. The catalysed reaction is an [RNA] containing cytidine + H2O = an [RNA]-3'-cytidine-3'-phosphate + a 5'-hydroxy-ribonucleotide-3'-[RNA].. It carries out the reaction an [RNA] containing uridine + H2O = an [RNA]-3'-uridine-3'-phosphate + a 5'-hydroxy-ribonucleotide-3'-[RNA].. In terms of biological role, endonuclease that catalyzes the cleavage of RNA on the 3' side of pyrimidine nucleotides. Acts on single-stranded and double-stranded RNA. This is Ribonuclease pancreatic alpha-type from Rattus fuscipes (Bush rat).